Here is a 141-residue protein sequence, read N- to C-terminus: Putative pre-16S rRNA nuclease (141 aa).

Belongs to the YqgF nuclease family.

The protein resides in the cytoplasm. In terms of biological role, could be a nuclease involved in processing of the 5'-end of pre-16S rRNA. This is Putative pre-16S rRNA nuclease from Histophilus somni (strain 129Pt) (Haemophilus somnus).